Here is an 818-residue protein sequence, read N- to C-terminus: Glycerol-3-phosphate acyltransferase (818 aa).

The HXXXXD motif motif lies at 305-310 (HRSHMD).

It belongs to the GPAT/DAPAT family.

The protein resides in the cell inner membrane. It carries out the reaction sn-glycerol 3-phosphate + an acyl-CoA = a 1-acyl-sn-glycero-3-phosphate + CoA. The protein operates within phospholipid metabolism; CDP-diacylglycerol biosynthesis; CDP-diacylglycerol from sn-glycerol 3-phosphate: step 1/3. The chain is Glycerol-3-phosphate acyltransferase from Photorhabdus laumondii subsp. laumondii (strain DSM 15139 / CIP 105565 / TT01) (Photorhabdus luminescens subsp. laumondii).